A 100-amino-acid chain; its full sequence is Urease subunit gamma (100 aa).

Belongs to the urease gamma subunit family. In terms of assembly, heterotrimer of UreA (gamma), UreB (beta) and UreC (alpha) subunits. Three heterotrimers associate to form the active enzyme.

Its subcellular location is the cytoplasm. It carries out the reaction urea + 2 H2O + H(+) = hydrogencarbonate + 2 NH4(+). Its pathway is nitrogen metabolism; urea degradation; CO(2) and NH(3) from urea (urease route): step 1/1. This Chromohalobacter salexigens (strain ATCC BAA-138 / DSM 3043 / CIP 106854 / NCIMB 13768 / 1H11) protein is Urease subunit gamma.